A 160-amino-acid chain; its full sequence is Globin CTT-Y (160 aa).

The signal sequence occupies residues 1-16 (MKVLAIFALCIIGALA). The Globin domain occupies 17–160 (TPCDDFKIMQ…IRKVINANLE (144 aa)). 2 residues coordinate heme b: His74 and His109.

This sequence belongs to the globin family.

The chain is Globin CTT-Y (CTT-Y) from Chironomus thummi piger (Midge).